A 255-amino-acid chain; its full sequence is 5'-nucleotidase SurE (255 aa).

Residues D8, D9, S40, and N93 each contribute to the a divalent metal cation site.

Belongs to the SurE nucleotidase family. Requires a divalent metal cation as cofactor.

The protein resides in the cytoplasm. The catalysed reaction is a ribonucleoside 5'-phosphate + H2O = a ribonucleoside + phosphate. Its function is as follows. Nucleotidase that shows phosphatase activity on nucleoside 5'-monophosphates. The chain is 5'-nucleotidase SurE from Rhodopseudomonas palustris (strain BisB5).